A 390-amino-acid polypeptide reads, in one-letter code: 8-amino-7-oxononanoate synthase (390 aa).

Position 19 (Arg-19) interacts with substrate. 106-107 (GY) contacts pyridoxal 5'-phosphate. Residue His-131 coordinates substrate. Positions 176, 204, and 233 each coordinate pyridoxal 5'-phosphate. An N6-(pyridoxal phosphate)lysine modification is found at Lys-236. Thr-350 serves as a coordination point for substrate.

Belongs to the class-II pyridoxal-phosphate-dependent aminotransferase family. BioF subfamily. Homodimer. Requires pyridoxal 5'-phosphate as cofactor.

It carries out the reaction 6-carboxyhexanoyl-[ACP] + L-alanine + H(+) = (8S)-8-amino-7-oxononanoate + holo-[ACP] + CO2. Its pathway is cofactor biosynthesis; biotin biosynthesis. Catalyzes the decarboxylative condensation of pimeloyl-[acyl-carrier protein] and L-alanine to produce 8-amino-7-oxononanoate (AON), [acyl-carrier protein], and carbon dioxide. The protein is 8-amino-7-oxononanoate synthase of Pseudomonas putida (strain GB-1).